The chain runs to 228 residues: L-ribulose-5-phosphate 4-epimerase UlaF (228 aa).

Substrate is bound by residues 26–27 (GN), 43–44 (SG), and 72–73 (SS). Zn(2+) contacts are provided by D74, H93, and H95. The Proton donor/acceptor role is filled by D118. Residue H167 coordinates Zn(2+). Y225 serves as the catalytic Proton donor/acceptor.

This sequence belongs to the aldolase class II family. AraD/FucA subfamily. The cofactor is Zn(2+).

The catalysed reaction is L-ribulose 5-phosphate = D-xylulose 5-phosphate. It participates in cofactor degradation; L-ascorbate degradation; D-xylulose 5-phosphate from L-ascorbate: step 4/4. Functionally, catalyzes the isomerization of L-ribulose 5-phosphate to D-xylulose 5-phosphate. Is involved in the anaerobic L-ascorbate utilization. The polypeptide is L-ribulose-5-phosphate 4-epimerase UlaF (Escherichia coli O45:K1 (strain S88 / ExPEC)).